A 563-amino-acid chain; its full sequence is Delta-1-pyrroline-5-carboxylate dehydrogenase, mitochondrial (563 aa).

The N-terminal 24 residues, 1-24 (MLLPAPALRRALLSRPWTGAGLRW), are a transit peptide targeting the mitochondrion. K31 is subject to N6-succinyllysine. At S44 the chain carries Phosphoserine. K52 carries the post-translational modification N6-acetyllysine. Residues K93, K99, K114, K130, and K175 each carry the N6-acetyllysine; alternate modification. Residues K93, K99, K114, K130, and K175 each carry the N6-succinyllysine; alternate modification. NAD(+)-binding positions include S208, K233, and 286–290 (GSVPT). E314 (proton acceptor) is an active-site residue. K318 carries the N6-acetyllysine modification. K347 carries the N6-succinyllysine modification. C348 acts as the Nucleophile in catalysis. K365 and K376 each carry N6-acetyllysine. K395 carries the post-translational modification N6-succinyllysine. Residue E447 coordinates NAD(+). N6-acetyllysine is present on K462. N6-acetyllysine; alternate is present on K509. K509 bears the N6-succinyllysine; alternate mark. S513 provides a ligand contact to substrate. 2 positions are modified to N6-acetyllysine: K531 and K552.

Belongs to the aldehyde dehydrogenase family. Homodimer. In terms of tissue distribution, highest expression is found in liver followed by skeletal muscle, kidney, heart, brain, placenta, lung and pancreas.

It localises to the mitochondrion matrix. It carries out the reaction L-glutamate 5-semialdehyde + NAD(+) + H2O = L-glutamate + NADH + 2 H(+). It participates in amino-acid degradation; L-proline degradation into L-glutamate; L-glutamate from L-proline: step 2/2. In terms of biological role, irreversible conversion of delta-1-pyrroline-5-carboxylate (P5C), derived either from proline or ornithine, to glutamate. This is a necessary step in the pathway interconnecting the urea and tricarboxylic acid cycles. The preferred substrate is glutamic gamma-semialdehyde, other substrates include succinic, glutaric and adipic semialdehydes. The protein is Delta-1-pyrroline-5-carboxylate dehydrogenase, mitochondrial (ALDH4A1) of Homo sapiens (Human).